We begin with the raw amino-acid sequence, 336 residues long: Flavonol synthase/flavanone 3-hydroxylase (336 aa).

Residues 99 to 118 (EKESVAKPEDSKDIEGYGTK) form a disordered region. One can recognise a Fe2OG dioxygenase domain in the interval 196-296 (MAEYMMKINY…RMSWPVFLEP (101 aa)). A 2-oxoglutarate-binding site is contributed by 204–206 (NYY). Residues His221, Asp223, and His277 each contribute to the Fe cation site. 287 to 289 (RMS) contributes to the 2-oxoglutarate binding site.

The protein belongs to the iron/ascorbate-dependent oxidoreductase family. The cofactor is L-ascorbate. Requires Fe(2+) as cofactor. Expressed in young seedlings (at protein level). Expressed in roots, emerging leaves, shoot-root transition zone, trichomes, flowers and siliques. In cotyledons, expressed mostly on the adaxial side and only in guard cells on the abaxial side.

It localises to the cytoplasm. The protein localises to the nucleus. The enzyme catalyses a (2R,3R)-dihydroflavonol + 2-oxoglutarate + O2 = a flavonol + succinate + CO2 + H2O. The catalysed reaction is a (2S)-flavan-4-one + 2-oxoglutarate + O2 = a (2R,3R)-dihydroflavonol + succinate + CO2. The protein operates within secondary metabolite biosynthesis; flavonoid biosynthesis. In terms of biological role, catalyzes the formation of flavonols from dihydroflavonols. It can act on dihydrokaempferol to produce kaempferol, on dihydroquercetin to produce quercitin and on dihydromyricetin to produce myricetin. In vitro catalyzes the oxidation of both enantiomers of naringenin to give both cis- and trans-dihydrokaempferol. The polypeptide is Flavonol synthase/flavanone 3-hydroxylase (FLS1) (Arabidopsis thaliana (Mouse-ear cress)).